An 803-amino-acid chain; its full sequence is Translation initiation factor IF-2 (803 aa).

Basic and acidic residues predominate over residues 65-75 (PDKVEEKKEHT). Residues 65 to 186 (PDKVEEKKEH…PKSRKSKTLK (122 aa)) form a disordered region. The span at 175–185 (NKPKSRKSKTL) shows a compositional bias: basic residues. The 169-residue stretch at 300–468 (IRPPVVTIMG…ILLTADAALE (169 aa)) folds into the tr-type G domain. The tract at residues 309–316 (GHVDHGKT) is G1. 309-316 (GHVDHGKT) contacts GTP. Positions 334 to 338 (GITQH) are G2. A G3 region spans residues 355-358 (DTPG). Residues 355–359 (DTPGH) and 409–412 (NKID) contribute to the GTP site. The segment at 409–412 (NKID) is G4. Residues 445 to 447 (SAK) are G5.

This sequence belongs to the TRAFAC class translation factor GTPase superfamily. Classic translation factor GTPase family. IF-2 subfamily.

Its subcellular location is the cytoplasm. In terms of biological role, one of the essential components for the initiation of protein synthesis. Protects formylmethionyl-tRNA from spontaneous hydrolysis and promotes its binding to the 30S ribosomal subunits. Also involved in the hydrolysis of GTP during the formation of the 70S ribosomal complex. This is Translation initiation factor IF-2 from Tropheryma whipplei (strain TW08/27) (Whipple's bacillus).